The following is a 399-amino-acid chain: Argininosuccinate synthase (399 aa).

9–17 lines the ATP pocket; it reads AYSGGLDTS. Tyrosine 85 serves as a coordination point for L-citrulline. Position 115 (glycine 115) interacts with ATP. Positions 117, 121, and 122 each coordinate L-aspartate. Asparagine 121 provides a ligand contact to L-citrulline. L-citrulline contacts are provided by arginine 125, serine 173, glutamate 258, and tyrosine 270.

This sequence belongs to the argininosuccinate synthase family. Type 1 subfamily. In terms of assembly, homotetramer.

It localises to the cytoplasm. It carries out the reaction L-citrulline + L-aspartate + ATP = 2-(N(omega)-L-arginino)succinate + AMP + diphosphate + H(+). Its pathway is amino-acid biosynthesis; L-arginine biosynthesis; L-arginine from L-ornithine and carbamoyl phosphate: step 2/3. This is Argininosuccinate synthase from Streptococcus gordonii (strain Challis / ATCC 35105 / BCRC 15272 / CH1 / DL1 / V288).